A 219-amino-acid chain; its full sequence is UPF0319 protein MS0844 (219 aa).

Positions 1 to 21 (MKFRLTALAVAALLTSTASFA) are cleaved as a signal peptide.

The protein belongs to the UPF0319 family.

The protein is UPF0319 protein MS0844 of Mannheimia succiniciproducens (strain KCTC 0769BP / MBEL55E).